The sequence spans 112 residues: Nucleoid-associated protein Pfl01_1806 (112 aa).

This sequence belongs to the YbaB/EbfC family. Homodimer.

It localises to the cytoplasm. Its subcellular location is the nucleoid. Its function is as follows. Binds to DNA and alters its conformation. May be involved in regulation of gene expression, nucleoid organization and DNA protection. The polypeptide is Nucleoid-associated protein Pfl01_1806 (Pseudomonas fluorescens (strain Pf0-1)).